The following is a 196-amino-acid chain: Large ribosomal subunit protein bL25 (196 aa).

The protein belongs to the bacterial ribosomal protein bL25 family. CTC subfamily. Part of the 50S ribosomal subunit; part of the 5S rRNA/L5/L18/L25 subcomplex. Contacts the 5S rRNA. Binds to the 5S rRNA independently of L5 and L18.

This is one of the proteins that binds to the 5S RNA in the ribosome where it forms part of the central protuberance. The polypeptide is Large ribosomal subunit protein bL25 (Bacteroides thetaiotaomicron (strain ATCC 29148 / DSM 2079 / JCM 5827 / CCUG 10774 / NCTC 10582 / VPI-5482 / E50)).